The following is a 69-amino-acid chain: Small, acid-soluble spore protein C4 (69 aa).

The protein belongs to the alpha/beta-type SASP family.

SASP are bound to spore DNA. They are double-stranded DNA-binding proteins that cause DNA to change to an a-like conformation. They protect the DNA backbone from chemical and enzymatic cleavage and are thus involved in dormant spore's high resistance to UV light. In Priestia megaterium (Bacillus megaterium), this protein is Small, acid-soluble spore protein C4 (SASP-C4).